Reading from the N-terminus, the 1059-residue chain is Protein OPAQUE10 (1059 aa).

7 repeat units span residues Ser269–Cys342, Ser343–Cys416, Ser417–Cys490, Ser491–Cys564, Phe565–Cys638, Ser639–Cys712, and Ser713–Cys786. The 7 X approximate repeats stretch occupies residues Ser269–Cys786. The tract at residues Phe511 to Ser534 is disordered. The segment covering Pro515 to Ser534 has biased composition (basic and acidic residues). Disordered stretches follow at residues Gln732–Ser756, Glu856–Thr875, and Ser889–Gly998. Positions Leu858–Leu869 are enriched in basic and acidic residues. Composition is skewed to polar residues over residues Asp907 to Gly924 and Ala945 to Ser958. A compositionally biased stretch (basic and acidic residues) spans Thr984–Arg994. Residues Val1003–Leu1023 traverse the membrane as a helical segment.

As to quaternary structure, homodimer. Interacts (via N-terminus) with FL1 (via C-terminus), HIP, 19 kDa alpha-zein (AC P06677), 22 kDa alpha-zein (AC O48966), 16 kDa gamma-zein (AC P08031) and 50 kDa gamma-zein (AC C0P381). In terms of tissue distribution, expressed in kernels.

It localises to the endoplasmic reticulum membrane. Functionally, cereal endosperm protein required for the ring-shaped distribution of 22 kDa alpha- and 16 kDa gamma-zeins in protein bodies. This Zea mays (Maize) protein is Protein OPAQUE10.